Reading from the N-terminus, the 488-residue chain is Fumarate hydratase (488 aa).

Residues Ser-105, Ser-147, Asn-148, Thr-194, and His-195 each coordinate (S)-malate. The active-site Proton donor/acceptor is His-195. Residue Ser-340 is part of the active site. Residues Ser-341, Lys-346, and Asn-348 each coordinate (S)-malate.

The protein belongs to the class-II fumarase/aspartase family. Fumarase subfamily. Homotetramer.

It localises to the cytoplasm. The protein localises to the cytosol. The enzyme catalyses (S)-malate = fumarate + H2O. In terms of biological role, catalyzes the reversible stereospecific interconversion of fumarate to L-malate. Fumarate metabolism in the cytosol plays a role during urea cycle and arginine metabolism; fumarate being a by-product of the urea cycle and amino-acid catabolism. The polypeptide is Fumarate hydratase (Schistosoma mansoni (Blood fluke)).